The chain runs to 160 residues: Cyclic pyranopterin monophosphate synthase (160 aa).

Substrate-binding positions include 76–78 and 114–115; these read LCH and ME. The active site involves Asp-129.

The protein belongs to the MoaC family. As to quaternary structure, homohexamer; trimer of dimers.

The catalysed reaction is (8S)-3',8-cyclo-7,8-dihydroguanosine 5'-triphosphate = cyclic pyranopterin phosphate + diphosphate. The protein operates within cofactor biosynthesis; molybdopterin biosynthesis. Its function is as follows. Catalyzes the conversion of (8S)-3',8-cyclo-7,8-dihydroguanosine 5'-triphosphate to cyclic pyranopterin monophosphate (cPMP). This is Cyclic pyranopterin monophosphate synthase from Mesorhizobium japonicum (strain LMG 29417 / CECT 9101 / MAFF 303099) (Mesorhizobium loti (strain MAFF 303099)).